The following is a 293-amino-acid chain: 33 kDa chaperonin (293 aa).

2 disulfides stabilise this stretch: Cys-238/Cys-240 and Cys-271/Cys-274.

Belongs to the HSP33 family. In terms of processing, under oxidizing conditions two disulfide bonds are formed involving the reactive cysteines. Under reducing conditions zinc is bound to the reactive cysteines and the protein is inactive.

The protein resides in the cytoplasm. In terms of biological role, redox regulated molecular chaperone. Protects both thermally unfolding and oxidatively damaged proteins from irreversible aggregation. Plays an important role in the bacterial defense system toward oxidative stress. In Clostridium beijerinckii (strain ATCC 51743 / NCIMB 8052) (Clostridium acetobutylicum), this protein is 33 kDa chaperonin.